The chain runs to 561 residues: Dihydroxy-acid dehydratase (561 aa).

Cys50 is a binding site for [2Fe-2S] cluster. Asp82 contacts Mg(2+). [2Fe-2S] cluster is bound at residue Cys123. 2 residues coordinate Mg(2+): Asp124 and Lys125. Residue Lys125 is modified to N6-carboxylysine. Cys195 provides a ligand contact to [2Fe-2S] cluster. A Mg(2+)-binding site is contributed by Glu447. The active-site Proton acceptor is Ser473.

The protein belongs to the IlvD/Edd family. In terms of assembly, homodimer. [2Fe-2S] cluster is required as a cofactor. The cofactor is Mg(2+).

The enzyme catalyses (2R)-2,3-dihydroxy-3-methylbutanoate = 3-methyl-2-oxobutanoate + H2O. It catalyses the reaction (2R,3R)-2,3-dihydroxy-3-methylpentanoate = (S)-3-methyl-2-oxopentanoate + H2O. The protein operates within amino-acid biosynthesis; L-isoleucine biosynthesis; L-isoleucine from 2-oxobutanoate: step 3/4. It functions in the pathway amino-acid biosynthesis; L-valine biosynthesis; L-valine from pyruvate: step 3/4. Its function is as follows. Functions in the biosynthesis of branched-chain amino acids. Catalyzes the dehydration of (2R,3R)-2,3-dihydroxy-3-methylpentanoate (2,3-dihydroxy-3-methylvalerate) into 2-oxo-3-methylpentanoate (2-oxo-3-methylvalerate) and of (2R)-2,3-dihydroxy-3-methylbutanoate (2,3-dihydroxyisovalerate) into 2-oxo-3-methylbutanoate (2-oxoisovalerate), the penultimate precursor to L-isoleucine and L-valine, respectively. This is Dihydroxy-acid dehydratase from Acaryochloris marina (strain MBIC 11017).